Here is a 67-residue protein sequence, read N- to C-terminus: SPbeta prophage-derived uncharacterized protein YoqK (67 aa).

The chain is SPbeta prophage-derived uncharacterized protein YoqK (yoqK) from Bacillus subtilis (strain 168).